Here is a 283-residue protein sequence, read N- to C-terminus: 4-diphosphocytidyl-2-C-methyl-D-erythritol kinase (283 aa).

K10 is a catalytic residue. 99–109 (PMGGGLGGGSS) contacts ATP. Residue D141 is part of the active site.

This sequence belongs to the GHMP kinase family. IspE subfamily. In terms of assembly, homodimer.

The catalysed reaction is 4-CDP-2-C-methyl-D-erythritol + ATP = 4-CDP-2-C-methyl-D-erythritol 2-phosphate + ADP + H(+). The protein operates within isoprenoid biosynthesis; isopentenyl diphosphate biosynthesis via DXP pathway; isopentenyl diphosphate from 1-deoxy-D-xylulose 5-phosphate: step 3/6. Functionally, catalyzes the phosphorylation of the position 2 hydroxy group of 4-diphosphocytidyl-2C-methyl-D-erythritol. This chain is 4-diphosphocytidyl-2-C-methyl-D-erythritol kinase, found in Escherichia coli O81 (strain ED1a).